The following is a 192-amino-acid chain: MNTIWIAVGALTLLGLVFGAILGYASRRFAVEDDPVVEKIDAILPQSQCGQCGYPGCRPYAEAVGLQGEKINRCAPGGEAVMLKMAELLNVEPQPCDGEEQQAAPVRMLAVIDENNCIGCTKCIQACPVDAIVGATRAMHTVMSDLCTGCNLCVDPCPTHCIELRPVNETPDSWKWDLNTIPVRIIPVEQHA.

Positions 1 to 26 (MNTIWIAVGALTLLGLVFGAILGYAS) are hydrophobic. Positions 32–91 (EDDPVVEKIDAILPQSQCGQCGYPGCRPYAEAVGLQGEKINRCAPGGEAVMLKMAELLNV) constitute a 4Fe-4S domain. Residues Cys49, Cys52, Cys57, Cys74, Cys117, Cys120, Cys123, Cys127, Cys147, Cys150, Cys153, and Cys157 each coordinate [4Fe-4S] cluster. 2 consecutive 4Fe-4S ferredoxin-type domains span residues 108–137 (MLAV…GATR) and 138–167 (AMHT…LRPV).

This sequence belongs to the 4Fe4S bacterial-type ferredoxin family. RnfB subfamily. In terms of assembly, the complex is composed of six subunits: RsxA, RsxB, RsxC, RsxD, RsxE and RsxG. It depends on [4Fe-4S] cluster as a cofactor.

The protein resides in the cell inner membrane. In terms of biological role, part of a membrane-bound complex that couples electron transfer with translocation of ions across the membrane. Required to maintain the reduced state of SoxR. In Salmonella agona (strain SL483), this protein is Ion-translocating oxidoreductase complex subunit B.